Consider the following 945-residue polypeptide: Glutamyl aminopeptidase (945 aa).

The Cytoplasmic portion of the chain corresponds to 1-18 (MNFAEEEPSKKYCIKGKH). A helical; Signal-anchor for type II membrane protein membrane pass occupies residues 19–39 (VAIICGVVVAVGLIVGLSVGL). Residues 40–945 (TRSCEQDTTP…SIREWFASLP (906 aa)) lie on the Extracellular side of the membrane. The tract at residues 43–77 (CEQDTTPAPSQPPPEASTALPPQDQNVCPDSEDES) is disordered. 2 N-linked (GlcNAc...) asparagine glycosylation sites follow: N116 and N189. A substrate-binding site is contributed by E215. An N-linked (GlcNAc...) asparagine glycan is attached at N316. A substrate-binding site is contributed by 349-353 (GAMEN). Residue H385 coordinates Zn(2+). E386 serves as the catalytic Proton acceptor. Residues H389 and E408 each contribute to the Zn(2+) site. Residues N546, N601, N637, N669, N754, and N792 are each glycosylated (N-linked (GlcNAc...) asparagine). Residue R878 coordinates substrate.

This sequence belongs to the peptidase M1 family. In terms of assembly, homodimer; disulfide-linked. Requires Zn(2+) as cofactor. In terms of tissue distribution, early B-lineage cells and certain stromal cell of hemopoietic tissues. Also expressed by capillary endothelial cells, placenta, and epithelial cells of the intestine and proximal renal tubules.

The protein localises to the cell membrane. It catalyses the reaction Release of N-terminal glutamate (and to a lesser extent aspartate) from a peptide.. Its activity is regulated as follows. Substrate specificity is modulated by calcium which enhances the enzymatic activity for cleavage of acidic residues while reducing its activity with basic residues. Inhibited by aminopeptidase inhibitors amastatin and bestatin. Functionally, regulates central hypertension through its calcium-modulated preference to cleave N-terminal acidic residues from peptides such as angiotensin II. The polypeptide is Glutamyl aminopeptidase (Enpep) (Mus musculus (Mouse)).